Here is a 393-residue protein sequence, read N- to C-terminus: NAD(P)H-quinone oxidoreductase subunit H, chloroplastic (393 aa).

It belongs to the complex I 49 kDa subunit family. In terms of assembly, NDH is composed of at least 16 different subunits, 5 of which are encoded in the nucleus.

It localises to the plastid. The protein localises to the chloroplast thylakoid membrane. It catalyses the reaction a plastoquinone + NADH + (n+1) H(+)(in) = a plastoquinol + NAD(+) + n H(+)(out). The enzyme catalyses a plastoquinone + NADPH + (n+1) H(+)(in) = a plastoquinol + NADP(+) + n H(+)(out). In terms of biological role, NDH shuttles electrons from NAD(P)H:plastoquinone, via FMN and iron-sulfur (Fe-S) centers, to quinones in the photosynthetic chain and possibly in a chloroplast respiratory chain. The immediate electron acceptor for the enzyme in this species is believed to be plastoquinone. Couples the redox reaction to proton translocation, and thus conserves the redox energy in a proton gradient. The protein is NAD(P)H-quinone oxidoreductase subunit H, chloroplastic of Zea mays (Maize).